Consider the following 177-residue polypeptide: UPF0114 protein HPAG1_0183 (177 aa).

Transmembrane regions (helical) follow at residues 15–35 (WLLAPLCIAMSLVLVVLGYVF), 54–74 (LVLSALGLVDLLFMAGLVLMV), 102–122 (FNALKLKVSLSIVAISAIFLL), and 145–165 (PIFWQVVIHLVFVCSALLAAV).

Belongs to the UPF0114 family.

The protein localises to the cell membrane. The polypeptide is UPF0114 protein HPAG1_0183 (Helicobacter pylori (strain HPAG1)).